We begin with the raw amino-acid sequence, 568 residues long: MNSNNWLAFPLSPTHSSLPPHIHSSQNSHFNLGLVNDNIDNPFQNQGWNMINPHGGGGEGGEVPKVADFLGVSKSGDHHTDHNLVPYNDIHQTNASDYYFQTNSLLPTVVTCASNAPNNYELQESAHNLQSLTLSMGSTGAAAAEVATVKASPAETSADNSSSTTNTSGGAIVEATPRRTLETFGQRTSIYRGVTRHRWTGRYEAHLWDNSCRREGQSRKGRQVYLGGYDKEEKAARAYDLAALKYWGPSTTTNFPITNYEKEVEEMKNMTRQEFVASIRRKSSGFSRGASMYRGVTRHHQHGRWQARIGRVAGNKDLYLGTFSTEEEAAEAYDIAAIKFRGLNAVTNFEINRYDVKAILESNTLPIGGGAAKRLKEAQALESSRKREEMIALGSNFHQYGAASGSSSVASSSRLQLQPYPLSIQQPFEHLHHHQPLLTLQNNNDISQYHDSFSYIQTQLHLHQQQTNNYLQSSSHTSQLYNAYLQSNPGLLHGFVSDNNNTSGFLGNNGIGIGSSSTVGSSAEEEFPAVKVDYDMPPSGGATGYGGWNSGESAQGSNPGGVFTMWNE.

Residues 151–171 (ASPAETSADNSSSTTNTSGGA) are compositionally biased toward low complexity. Residues 151–173 (ASPAETSADNSSSTTNTSGGAIV) form a disordered region. 2 consecutive DNA-binding regions (AP2/ERF) follow at residues 190-256 (IYRG…TNFP) and 292-350 (MYRG…TNFE). A disordered region spans residues 548-568 (WNSGESAQGSNPGGVFTMWNE).

The protein belongs to the AP2/ERF transcription factor family. AP2 subfamily. Post-translationally, stabilized in root meristems by reactive oxygen species (ROS) mediated oxidative post-translational modification triggered by RGF1 hormone peptide in a RITF1-dependent manner. In terms of tissue distribution, expressed in roots, seedlings, flowers, and siliques. Also detected at low levels in leaves. In roots, specifically detected in the distal root meristem, including the QC. This tissue specificity is regulated by auxin gradient and depends on PIN proteins.

The protein localises to the nucleus. Probably acts as a transcriptional activator. Binds to the GCC-box pathogenesis-related promoter element. May be involved in the regulation of gene expression by stress factors and by components of stress signal transduction pathways. Master regulator of basal/root fate. Essential for root quiescent center (QC) and columella specification, stem cell activity, as well as for establishment of the stem cell niche during embryogenesis. Modulates the root polar auxin transport by regulating the distribution of PIN genes. Essential role in respecifying pattern and polarity in damaged roots. Direct target of the transcriptional corepressor TPL. Expression levels and patterns regulated post-transcriptionally by root meristem growth factors (RGFs). In Arabidopsis thaliana (Mouse-ear cress), this protein is AP2-like ethylene-responsive transcription factor PLT2.